The sequence spans 404 residues: WD repeat and SOCS box-containing protein 2 (404 aa).

WD repeat units lie at residues 105–148 (PPSR…LLLN), 151–191 (GHQD…KQIQ), 195–234 (GHLQWVYCCSISPDCSMLCSAAGEKSVFLWSMRSYTLIRK), 237–276 (GHQSSVVSCDFSPDSALLVTASYDTSVIMWDPYTGERLRS), and 291–330 (VHMSSLRSVCFSPEGLYLATVADDRLLRIWALELKAPVAF). In terms of domain architecture, SOCS box spans 356 to 404 (HVQFWTAPRVLSSLKHLCRKALRSFLTTYQVLALPIPKKMKEFLTYRTF).

Its pathway is protein modification; protein ubiquitination. May be a substrate-recognition component of a SCF-like ECS (Elongin-Cullin-SOCS-box protein) E3 ubiquitin ligase complex which mediates the ubiquitination and subsequent proteasomal degradation of target proteins. The sequence is that of WD repeat and SOCS box-containing protein 2 (Wsb2) from Mus musculus (Mouse).